A 674-amino-acid chain; its full sequence is NADH-ubiquinone oxidoreductase chain 5 (674 aa).

The next 17 helical transmembrane spans lie at 27-47 (GAHI…IVAF), 81-101 (LTVS…IFSV), 113-133 (FFAY…GDNY), 135-155 (IMFV…NFWF), 173-193 (VGDM…GNLD), 200-220 (IAPF…LLAA), 242-262 (TPVS…YLLL), 275-295 (LIVI…TGLL), 301-323 (RVIA…LSQY), 325-345 (VALF…LAAG), 363-383 (LIGF…SLIA), 410-430 (VAYW…LRLI), 453-473 (TIVM…GYVA), 514-534 (AIGT…LPVF), 556-576 (YVDV…GYVI), 616-636 (ALYL…PVLL), and 639-659 (ALIN…IPYI).

This sequence belongs to the complex I subunit 5 family.

The protein resides in the mitochondrion inner membrane. The catalysed reaction is a ubiquinone + NADH + 5 H(+)(in) = a ubiquinol + NAD(+) + 4 H(+)(out). Its function is as follows. Core subunit of the mitochondrial membrane respiratory chain NADH dehydrogenase (Complex I) that is believed to belong to the minimal assembly required for catalysis. Complex I functions in the transfer of electrons from NADH to the respiratory chain. The immediate electron acceptor for the enzyme is believed to be ubiquinone. The sequence is that of NADH-ubiquinone oxidoreductase chain 5 (ND5) from Mycosarcoma maydis (Corn smut fungus).